The following is a 73-amino-acid chain: Large ribosomal subunit protein bL31 (73 aa).

Zn(2+) contacts are provided by cysteine 16, cysteine 18, cysteine 37, and cysteine 40.

It belongs to the bacterial ribosomal protein bL31 family. Type A subfamily. Part of the 50S ribosomal subunit. Zn(2+) is required as a cofactor.

Functionally, binds the 23S rRNA. The sequence is that of Large ribosomal subunit protein bL31 from Pseudomonas savastanoi pv. phaseolicola (strain 1448A / Race 6) (Pseudomonas syringae pv. phaseolicola (strain 1448A / Race 6)).